A 208-amino-acid chain; its full sequence is N-(5'-phosphoribosyl)anthranilate isomerase (208 aa).

The protein belongs to the TrpF family.

The enzyme catalyses N-(5-phospho-beta-D-ribosyl)anthranilate = 1-(2-carboxyphenylamino)-1-deoxy-D-ribulose 5-phosphate. It functions in the pathway amino-acid biosynthesis; L-tryptophan biosynthesis; L-tryptophan from chorismate: step 3/5. The chain is N-(5'-phosphoribosyl)anthranilate isomerase from Chlamydia trachomatis serovar A (strain ATCC VR-571B / DSM 19440 / HAR-13).